We begin with the raw amino-acid sequence, 269 residues long: Tryptophan synthase alpha chain (269 aa).

Catalysis depends on proton acceptor residues E50 and D61.

It belongs to the TrpA family. As to quaternary structure, tetramer of two alpha and two beta chains.

The catalysed reaction is (1S,2R)-1-C-(indol-3-yl)glycerol 3-phosphate + L-serine = D-glyceraldehyde 3-phosphate + L-tryptophan + H2O. The protein operates within amino-acid biosynthesis; L-tryptophan biosynthesis; L-tryptophan from chorismate: step 5/5. In terms of biological role, the alpha subunit is responsible for the aldol cleavage of indoleglycerol phosphate to indole and glyceraldehyde 3-phosphate. This chain is Tryptophan synthase alpha chain, found in Francisella tularensis subsp. tularensis (strain FSC 198).